Here is a 299-residue protein sequence, read N- to C-terminus: N-acetylaspartate synthetase (299 aa).

The segment covering 44–57 (AAPGPAAAPPPAAG) has biased composition (pro residues). Residues 44–70 (AAPGPAAAPPPAAGPQPHGGTGGAGPP) are disordered. Residues 60–70 (PHGGTGGAGPP) are compositionally biased toward gly residues. Residues 118–138 (YALLAALCFAVTRSLLLTCLV) form a helical membrane-spanning segment. Residues 143-280 (LALRYYYSRK…VLPGMTLSLA (138 aa)) form the N-acetyltransferase domain.

It belongs to the NAT8 family. As to expression, expressed in brain, kidney, liver and spleen. In brain, present in neurons but not in astrocytes (at protein level). Expressed in brain, thymus and spleen.

It is found in the cytoplasm. Its subcellular location is the microsome membrane. The protein localises to the mitochondrion membrane. It localises to the endoplasmic reticulum membrane. The catalysed reaction is L-aspartate + acetyl-CoA = N-acetyl-L-aspartate + CoA + H(+). With respect to regulation, aminooxyacetic acid (AOAA) blocks its activity in both cytoplasm and mitochondria. Its function is as follows. Catalyzes the synthesis of N-acetylaspartate acid (NAA) from L-aspartate and acetyl-CoA. Promotes dopamine uptake by regulating TNF-alpha expression. Attenuates methamphetamine-induced inhibition of dopamine uptake. In Mus musculus (Mouse), this protein is N-acetylaspartate synthetase (Nat8l).